Consider the following 372-residue polypeptide: N-methyl-L-tryptophan oxidase (372 aa).

An FAD-binding site is contributed by 4–34 (DLIIIGSGSVGAAAGYYATRAGLKVLMTDAH). Residue Cys307 is modified to S-8alpha-FAD cysteine.

Belongs to the MSOX/MTOX family. MTOX subfamily. As to quaternary structure, monomer. It depends on FAD as a cofactor.

It catalyses the reaction N(alpha)-methyl-L-tryptophan + O2 + H2O = L-tryptophan + formaldehyde + H2O2. In terms of biological role, catalyzes the oxidative demethylation of N-methyl-L-tryptophan. The chain is N-methyl-L-tryptophan oxidase from Salmonella heidelberg (strain SL476).